A 319-amino-acid polypeptide reads, in one-letter code: Ankyrin repeat domain-containing protein 1 (319 aa).

A disordered region spans residues 46 to 65 (KTLPANSVKQGEEQRKSEKL). A coiled-coil region spans residues 53–89 (VKQGEEQRKSEKLREAELKKKKLEQRSKLENLEDLEI). The span at 55 to 65 (QGEEQRKSEKL) shows a compositional bias: basic and acidic residues. 5 ANK repeats span residues 152 to 181 (YKRT…QIEF), 185 to 214 (LEST…KISA), 218 to 247 (LLST…DLNA), 251 to 280 (EGDT…DLKV), and 284 to 315 (AGKT…KNSR).

In terms of assembly, interacts with TTN/titin and YBX1. As to expression, expressed in heart, cardiac muscle.

Its subcellular location is the nucleus. Functionally, may play an important role in endothelial cell activation. May act as a nuclear transcription factor that negatively regulates the expression of cardiac genes. This is Ankyrin repeat domain-containing protein 1 (Ankrd1) from Mus musculus (Mouse).